The following is a 255-amino-acid chain: 4-hydroxy-tetrahydrodipicolinate reductase (255 aa).

Residues 9 to 14, D35, 89 to 91, and 115 to 118 each bind NAD(+); these read GFKGKM, GTT, and APNF. H145 serves as the catalytic Proton donor/acceptor. (S)-2,3,4,5-tetrahydrodipicolinate is bound at residue H146. K149 serves as the catalytic Proton donor. 155-156 serves as a coordination point for (S)-2,3,4,5-tetrahydrodipicolinate; that stretch reads GT.

This sequence belongs to the DapB family.

The protein resides in the cytoplasm. It carries out the reaction (S)-2,3,4,5-tetrahydrodipicolinate + NAD(+) + H2O = (2S,4S)-4-hydroxy-2,3,4,5-tetrahydrodipicolinate + NADH + H(+). The enzyme catalyses (S)-2,3,4,5-tetrahydrodipicolinate + NADP(+) + H2O = (2S,4S)-4-hydroxy-2,3,4,5-tetrahydrodipicolinate + NADPH + H(+). It participates in amino-acid biosynthesis; L-lysine biosynthesis via DAP pathway; (S)-tetrahydrodipicolinate from L-aspartate: step 4/4. Functionally, catalyzes the conversion of 4-hydroxy-tetrahydrodipicolinate (HTPA) to tetrahydrodipicolinate. This is 4-hydroxy-tetrahydrodipicolinate reductase from Streptococcus pneumoniae (strain P1031).